A 337-amino-acid chain; its full sequence is Glyceraldehyde-3-phosphate dehydrogenase (337 aa).

Residues 12 to 13 (RI), Asp34, and Lys79 each bind NAD(+). Residues 150–152 (SCT), Thr181, 210–211 (TG), and Arg233 each bind D-glyceraldehyde 3-phosphate. Cys151 (nucleophile) is an active-site residue. Residue Asn315 coordinates NAD(+).

It belongs to the glyceraldehyde-3-phosphate dehydrogenase family. Homotetramer.

The protein localises to the cytoplasm. It carries out the reaction D-glyceraldehyde 3-phosphate + phosphate + NAD(+) = (2R)-3-phospho-glyceroyl phosphate + NADH + H(+). It participates in carbohydrate degradation; glycolysis; pyruvate from D-glyceraldehyde 3-phosphate: step 1/5. The chain is Glyceraldehyde-3-phosphate dehydrogenase (GPD) from Phanerodontia chrysosporium (White-rot fungus).